Here is a 214-residue protein sequence, read N- to C-terminus: ATP phosphoribosyltransferase (214 aa).

This sequence belongs to the ATP phosphoribosyltransferase family. Short subfamily. Heteromultimer composed of HisG and HisZ subunits.

The protein localises to the cytoplasm. The catalysed reaction is 1-(5-phospho-beta-D-ribosyl)-ATP + diphosphate = 5-phospho-alpha-D-ribose 1-diphosphate + ATP. It participates in amino-acid biosynthesis; L-histidine biosynthesis; L-histidine from 5-phospho-alpha-D-ribose 1-diphosphate: step 1/9. Functionally, catalyzes the condensation of ATP and 5-phosphoribose 1-diphosphate to form N'-(5'-phosphoribosyl)-ATP (PR-ATP). Has a crucial role in the pathway because the rate of histidine biosynthesis seems to be controlled primarily by regulation of HisG enzymatic activity. In Nostoc sp. (strain PCC 7120 / SAG 25.82 / UTEX 2576), this protein is ATP phosphoribosyltransferase (hisG).